The chain runs to 598 residues: Elongation factor 4 (598 aa).

One can recognise a tr-type G domain in the interval 2–184 (KNIRNFSIIA…EIVRKIPAPE (183 aa)). Residues 14-19 (DHGKST) and 131-134 (NKID) each bind GTP.

The protein belongs to the TRAFAC class translation factor GTPase superfamily. Classic translation factor GTPase family. LepA subfamily.

The protein localises to the cell inner membrane. It catalyses the reaction GTP + H2O = GDP + phosphate + H(+). In terms of biological role, required for accurate and efficient protein synthesis under certain stress conditions. May act as a fidelity factor of the translation reaction, by catalyzing a one-codon backward translocation of tRNAs on improperly translocated ribosomes. Back-translocation proceeds from a post-translocation (POST) complex to a pre-translocation (PRE) complex, thus giving elongation factor G a second chance to translocate the tRNAs correctly. Binds to ribosomes in a GTP-dependent manner. The sequence is that of Elongation factor 4 from Histophilus somni (strain 2336) (Haemophilus somnus).